The chain runs to 224 residues: Ribose-5-phosphate isomerase A (224 aa).

Substrate contacts are provided by residues 33 to 36 (TGST), 86 to 89 (DGAD), and 99 to 102 (KGGG). Glu-108 functions as the Proton acceptor in the catalytic mechanism. Lys-126 serves as a coordination point for substrate.

This sequence belongs to the ribose 5-phosphate isomerase family. In terms of assembly, homodimer.

The enzyme catalyses aldehydo-D-ribose 5-phosphate = D-ribulose 5-phosphate. Its pathway is carbohydrate degradation; pentose phosphate pathway; D-ribose 5-phosphate from D-ribulose 5-phosphate (non-oxidative stage): step 1/1. In terms of biological role, catalyzes the reversible conversion of ribose-5-phosphate to ribulose 5-phosphate. The chain is Ribose-5-phosphate isomerase A from Bordetella avium (strain 197N).